Reading from the N-terminus, the 104-residue chain is Flagellar hook-basal body complex protein FliE (104 aa).

The protein belongs to the FliE family.

The protein resides in the bacterial flagellum basal body. The sequence is that of Flagellar hook-basal body complex protein FliE from Escherichia coli O6:K15:H31 (strain 536 / UPEC).